Here is a 307-residue protein sequence, read N- to C-terminus: Protein rep (307 aa).

Y219 contributes to the DNA binding site.

Belongs to the Gram-positive plasmids replication protein type 1 family.

This is Protein rep (repA) from Bacillus sp.